Consider the following 713-residue polypeptide: Phosphoribosylformylglycinamidine synthase subunit PurL (713 aa).

Residue His-32 is part of the active site. Tyr-35 serves as a coordination point for ATP. Residue Glu-76 coordinates Mg(2+). Substrate contacts are provided by residues 77–80 and Arg-99; that span reads SHNH. Catalysis depends on His-78, which acts as the Proton acceptor. Asp-100 lines the Mg(2+) pocket. Gln-224 contributes to the substrate binding site. A Mg(2+)-binding site is contributed by Asp-252. 296–298 contributes to the substrate binding site; it reads ESQ. Positions 471 and 508 each coordinate ATP. Asn-509 lines the Mg(2+) pocket. Ser-511 is a substrate binding site.

This sequence belongs to the FGAMS family. Monomer. Part of the FGAM synthase complex composed of 1 PurL, 1 PurQ and 2 PurS subunits.

The protein resides in the cytoplasm. It catalyses the reaction N(2)-formyl-N(1)-(5-phospho-beta-D-ribosyl)glycinamide + L-glutamine + ATP + H2O = 2-formamido-N(1)-(5-O-phospho-beta-D-ribosyl)acetamidine + L-glutamate + ADP + phosphate + H(+). It functions in the pathway purine metabolism; IMP biosynthesis via de novo pathway; 5-amino-1-(5-phospho-D-ribosyl)imidazole from N(2)-formyl-N(1)-(5-phospho-D-ribosyl)glycinamide: step 1/2. Its function is as follows. Part of the phosphoribosylformylglycinamidine synthase complex involved in the purines biosynthetic pathway. Catalyzes the ATP-dependent conversion of formylglycinamide ribonucleotide (FGAR) and glutamine to yield formylglycinamidine ribonucleotide (FGAM) and glutamate. The FGAM synthase complex is composed of three subunits. PurQ produces an ammonia molecule by converting glutamine to glutamate. PurL transfers the ammonia molecule to FGAR to form FGAM in an ATP-dependent manner. PurS interacts with PurQ and PurL and is thought to assist in the transfer of the ammonia molecule from PurQ to PurL. In Thermococcus sibiricus (strain DSM 12597 / MM 739), this protein is Phosphoribosylformylglycinamidine synthase subunit PurL.